The sequence spans 416 residues: Probable F-box protein At5g47300 (416 aa).

The F-box domain maps to 40 to 86 (TLMLSDLPGDLLEEILCRVPATSLKQLRSTCKQWNNLFNNGRFTRKH).

In Arabidopsis thaliana (Mouse-ear cress), this protein is Probable F-box protein At5g47300.